Here is a 186-residue protein sequence, read N- to C-terminus: Peptidyl-tRNA hydrolase (186 aa).

Residue Tyr14 participates in tRNA binding. His19 functions as the Proton acceptor in the catalytic mechanism. Phe64, Asn66, and Asn112 together coordinate tRNA.

The protein belongs to the PTH family. As to quaternary structure, monomer.

The protein localises to the cytoplasm. It catalyses the reaction an N-acyl-L-alpha-aminoacyl-tRNA + H2O = an N-acyl-L-amino acid + a tRNA + H(+). Functionally, hydrolyzes ribosome-free peptidyl-tRNAs (with 1 or more amino acids incorporated), which drop off the ribosome during protein synthesis, or as a result of ribosome stalling. Its function is as follows. Catalyzes the release of premature peptidyl moieties from peptidyl-tRNA molecules trapped in stalled 50S ribosomal subunits, and thus maintains levels of free tRNAs and 50S ribosomes. The sequence is that of Peptidyl-tRNA hydrolase from Mycoplasma capricolum subsp. capricolum (strain California kid / ATCC 27343 / NCTC 10154).